The primary structure comprises 189 residues: Crossover junction endodeoxyribonuclease RuvC (189 aa).

Active-site residues include D9, E70, and D143. Mg(2+) contacts are provided by D9, E70, and D143. Over residues M162–W178 the composition is skewed to low complexity. The interval M162–R189 is disordered. A compositionally biased stretch (basic and acidic residues) spans A179–R189.

It belongs to the RuvC family. As to quaternary structure, homodimer which binds Holliday junction (HJ) DNA. The HJ becomes 2-fold symmetrical on binding to RuvC with unstacked arms; it has a different conformation from HJ DNA in complex with RuvA. In the full resolvosome a probable DNA-RuvA(4)-RuvB(12)-RuvC(2) complex forms which resolves the HJ. It depends on Mg(2+) as a cofactor.

It localises to the cytoplasm. The enzyme catalyses Endonucleolytic cleavage at a junction such as a reciprocal single-stranded crossover between two homologous DNA duplexes (Holliday junction).. Its function is as follows. The RuvA-RuvB-RuvC complex processes Holliday junction (HJ) DNA during genetic recombination and DNA repair. Endonuclease that resolves HJ intermediates. Cleaves cruciform DNA by making single-stranded nicks across the HJ at symmetrical positions within the homologous arms, yielding a 5'-phosphate and a 3'-hydroxyl group; requires a central core of homology in the junction. The consensus cleavage sequence is 5'-(A/T)TT(C/G)-3'. Cleavage occurs on the 3'-side of the TT dinucleotide at the point of strand exchange. HJ branch migration catalyzed by RuvA-RuvB allows RuvC to scan DNA until it finds its consensus sequence, where it cleaves and resolves the cruciform DNA. The protein is Crossover junction endodeoxyribonuclease RuvC of Paenarthrobacter aurescens (strain TC1).